A 224-amino-acid chain; its full sequence is MPGSPRPAPSWVLLLRLLALLRPPGLGEACSCAPAHPQQHICHSALVIRAKISSEKVVPASADPADTEKMLRYEIKQIKMFKGFEKVKDVQYIYTPFDSSLCGVKLEANSQKQYLLTGQVLSDGKVFIHLCNYIEPWEDLSLVQRESLNHHYHLNCGCQITTCYTVPCTISAPNECLWTDWLLERKLYGYQAQHYVCMKHVDGTCSWYRGHLPLRKEFVDIVQP.

A signal peptide spans 1 to 29; sequence MPGSPRPAPSWVLLLRLLALLRPPGLGEA. Zn(2+) is bound at residue C30. Involved in metalloproteinase-binding regions lie at residues 30 to 33 and 99 to 100; these read CSCA and SS. Intrachain disulfides connect C30-C102, C32-C131, C42-C156, C158-C205, C163-C168, and C176-C197. Residues 30–156 enclose the NTR domain; it reads CSCAPAHPQQ…SLNHHYHLNC (127 aa).

This sequence belongs to the protease inhibitor I35 (TIMP) family. In terms of tissue distribution, abundant in heart and present at low levels in many other tissues.

Its subcellular location is the secreted. Functionally, complexes with metalloproteinases (such as collagenases) and irreversibly inactivates them by binding to their catalytic zinc cofactor. Known to act on MMP-1, MMP-2, MMP-3, MMP-7 and MMP-9. The polypeptide is Metalloproteinase inhibitor 4 (TIMP4) (Homo sapiens (Human)).